Reading from the N-terminus, the 229-residue chain is MPGLTIGDTVPNLELDSTHGKIRIHDYVGDGYAIIFSHPADFTPVCTTEMAAMAGYAKEFEKRGVKLLGISCDDVESHRQWTKDVEAYGGKQQQQQATTTKVTFPILADPARDAIRQLNMVDPDEKDAAGRSMPSRALHVVGPDKAVKLSFLYPATTGRNMDEVLRAVDSLLTAAKHGGKVATPANWKPGECAVIAPGVSDEEARKMFPQGFETADLPSKKGYLRFTKV.

In terms of domain architecture, Thioredoxin spans 4–173 (LTIGDTVPNL…VLRAVDSLLT (170 aa)). Cys46 (cysteine sulfenic acid (-SOH) intermediate) is an active-site residue. The Bipartite nuclear localization signal motif lies at 205 to 228 (RKMFPQGFETADLPSKKGYLRFTK).

This sequence belongs to the peroxiredoxin family. Prx6 subfamily.

The protein resides in the nucleus. The protein localises to the cytoplasm. The enzyme catalyses a hydroperoxide + [thioredoxin]-dithiol = an alcohol + [thioredoxin]-disulfide + H2O. Thiol-specific peroxidase that catalyzes the reduction of hydrogen peroxide and organic hydroperoxides to water and alcohols, respectively. Seems to contribute to the inhibition of germination during stress. This Zea mays (Maize) protein is 1-Cys peroxiredoxin PER1 (PER1).